We begin with the raw amino-acid sequence, 50 residues long: Large ribosomal subunit protein eL39 (50 aa).

It belongs to the eukaryotic ribosomal protein eL39 family.

In Archaeoglobus fulgidus (strain ATCC 49558 / DSM 4304 / JCM 9628 / NBRC 100126 / VC-16), this protein is Large ribosomal subunit protein eL39 (rpl39e).